The chain runs to 263 residues: Receptor expression-enhancing protein 3-A (263 aa).

2 helical membrane-spanning segments follow: residues 2 to 22 (VSWI…PAYF) and 35 to 55 (YVRW…EAIA). Disordered regions lie at residues 161-228 (GDET…SMRS) and 240-263 (YASL…AHHL). A compositionally biased stretch (acidic residues) spans 199 to 214 (DDNTDEDVEVNSEDEV). A compositionally biased stretch (basic residues) spans 242 to 251 (SLKHKPKKRP).

It belongs to the DP1 family.

It localises to the endoplasmic reticulum membrane. Functionally, microtubule-binding protein required to ensure proper cell division and nuclear envelope reassembly by sequestering the endoplasmic reticulum away from chromosomes during mitosis. Probably acts by clearing the endoplasmic reticulum membrane from metaphase chromosomes. The sequence is that of Receptor expression-enhancing protein 3-A (reep3-a) from Xenopus laevis (African clawed frog).